The chain runs to 800 residues: DNA topoisomerase 4 subunit A (800 aa).

Positions 31-495 (LPDVRDGLKP…EIEEIKIDKE (465 aa)) constitute a Topo IIA-type catalytic domain. The O-(5'-phospho-DNA)-tyrosine intermediate role is filled by Tyr119.

This sequence belongs to the type II topoisomerase GyrA/ParC subunit family. ParC type 2 subfamily. Heterotetramer composed of ParC and ParE.

It is found in the cell membrane. It carries out the reaction ATP-dependent breakage, passage and rejoining of double-stranded DNA.. Topoisomerase IV is essential for chromosome segregation. It relaxes supercoiled DNA. Performs the decatenation events required during the replication of a circular DNA molecule. This Staphylococcus aureus (strain MW2) protein is DNA topoisomerase 4 subunit A.